The chain runs to 237 residues: MKEEIAATVVFLTMLVKKHKQLSKQKIEKFAAKLTTILFAKYKNHWYAENPMKGQAFRCIRINTYQAIDAVFEKACAESNVDFNDLGLPKEMTIWVDPFEVCCRYGEKNDPFTIASFKGKDGYNAPKRISHAVEKATSDYYSGTSSDEELTNKEPKTIPKVSNPNSIYQCADYSQAIPSWSQYPRRKNYQNNGYPPNPPMPYYPQQKAYKAFRQSSAFSGPRVDRYHWVNMKRSAIS.

The protein belongs to the BTG family.

The protein is Maternal B9.10 protein of Xenopus laevis (African clawed frog).